The following is a 969-amino-acid chain: Isoleucine--tRNA ligase (969 aa).

Positions 68–78 match the 'HIGH' region motif; it reads PYANGNLHMGH. Glu584 is a binding site for L-isoleucyl-5'-AMP. A 'KMSKS' region motif is present at residues 625-629; it reads KMSKS. ATP is bound at residue Lys628. Zn(2+)-binding residues include Cys938, Cys941, Cys958, and Cys961.

This sequence belongs to the class-I aminoacyl-tRNA synthetase family. IleS type 1 subfamily. Monomer. Zn(2+) is required as a cofactor.

The protein localises to the cytoplasm. It carries out the reaction tRNA(Ile) + L-isoleucine + ATP = L-isoleucyl-tRNA(Ile) + AMP + diphosphate. Functionally, catalyzes the attachment of isoleucine to tRNA(Ile). As IleRS can inadvertently accommodate and process structurally similar amino acids such as valine, to avoid such errors it has two additional distinct tRNA(Ile)-dependent editing activities. One activity is designated as 'pretransfer' editing and involves the hydrolysis of activated Val-AMP. The other activity is designated 'posttransfer' editing and involves deacylation of mischarged Val-tRNA(Ile). In Prochlorococcus marinus (strain SARG / CCMP1375 / SS120), this protein is Isoleucine--tRNA ligase.